The primary structure comprises 349 residues: sn-glycerol-3-phosphate import ATP-binding protein UgpC (349 aa).

The ABC transporter domain maps to 4 to 235 (ITLKDVHKTY…PATAFVATFI (232 aa)). Residue 37-44 (GPSGCGKS) coordinates ATP.

The protein belongs to the ABC transporter superfamily. sn-glycerol-3-phosphate importer (TC 3.A.1.1.3) family. The complex is composed of two ATP-binding proteins (UgpC), two transmembrane proteins (UgpA and UgpE) and a solute-binding protein (UgpB).

The protein localises to the cell inner membrane. It carries out the reaction sn-glycerol 3-phosphate(out) + ATP + H2O = sn-glycerol 3-phosphate(in) + ADP + phosphate + H(+). Part of the ABC transporter complex UgpBAEC involved in sn-glycerol-3-phosphate (G3P) import. Responsible for energy coupling to the transport system. The chain is sn-glycerol-3-phosphate import ATP-binding protein UgpC from Rhizobium meliloti (strain 1021) (Ensifer meliloti).